Here is a 156-residue protein sequence, read N- to C-terminus: SsrA-binding protein (156 aa).

The tract at residues 131–156 is disordered; sequence YDKRQTLREQQDKREALRVMRERNRG.

It belongs to the SmpB family.

It localises to the cytoplasm. Its function is as follows. Required for rescue of stalled ribosomes mediated by trans-translation. Binds to transfer-messenger RNA (tmRNA), required for stable association of tmRNA with ribosomes. tmRNA and SmpB together mimic tRNA shape, replacing the anticodon stem-loop with SmpB. tmRNA is encoded by the ssrA gene; the 2 termini fold to resemble tRNA(Ala) and it encodes a 'tag peptide', a short internal open reading frame. During trans-translation Ala-aminoacylated tmRNA acts like a tRNA, entering the A-site of stalled ribosomes, displacing the stalled mRNA. The ribosome then switches to translate the ORF on the tmRNA; the nascent peptide is terminated with the 'tag peptide' encoded by the tmRNA and targeted for degradation. The ribosome is freed to recommence translation, which seems to be the essential function of trans-translation. The protein is SsrA-binding protein of Arthrobacter sp. (strain FB24).